The following is a 175-amino-acid chain: NADH-ubiquinone oxidoreductase chain 6 (175 aa).

Transmembrane regions (helical) follow at residues methionine 1–serine 21, serine 24–valine 44, phenylalanine 46–valine 66, isoleucine 86–leucine 106, and tyrosine 149–isoleucine 169.

This sequence belongs to the complex I subunit 6 family. Core subunit of respiratory chain NADH dehydrogenase (Complex I) which is composed of 45 different subunits.

It localises to the mitochondrion inner membrane. The catalysed reaction is a ubiquinone + NADH + 5 H(+)(in) = a ubiquinol + NAD(+) + 4 H(+)(out). Core subunit of the mitochondrial membrane respiratory chain NADH dehydrogenase (Complex I) which catalyzes electron transfer from NADH through the respiratory chain, using ubiquinone as an electron acceptor. Essential for the catalytic activity and assembly of complex I. The polypeptide is NADH-ubiquinone oxidoreductase chain 6 (MT-ND6) (Dugong dugon (Dugong)).